A 103-amino-acid chain; its full sequence is Small ribosomal subunit protein uS10 (103 aa).

Belongs to the universal ribosomal protein uS10 family. In terms of assembly, part of the 30S ribosomal subunit.

Its function is as follows. Involved in the binding of tRNA to the ribosomes. This chain is Small ribosomal subunit protein uS10, found in Xanthomonas campestris pv. campestris (strain B100).